The following is a 573-amino-acid chain: Pyrophosphate--fructose 6-phosphate 1-phosphotransferase (573 aa).

Gly-90 contacts diphosphate. Position 184 (Asp-184) interacts with Mg(2+). Substrate-binding positions include 212–214, 251–252, 259–261, Glu-320, and 434–437; these read TID, KY, MGR, and YEGR. Asp-214 (proton acceptor) is an active-site residue.

This sequence belongs to the phosphofructokinase type A (PFKA) family. PPi-dependent PFK group II subfamily. Clade 'Long' sub-subfamily. Homodimer. It depends on Mg(2+) as a cofactor.

Its subcellular location is the cytoplasm. It catalyses the reaction beta-D-fructose 6-phosphate + diphosphate = beta-D-fructose 1,6-bisphosphate + phosphate + H(+). It participates in carbohydrate degradation; glycolysis; D-glyceraldehyde 3-phosphate and glycerone phosphate from D-glucose: step 3/4. Non-allosteric. Functionally, catalyzes the phosphorylation of D-fructose 6-phosphate, the first committing step of glycolysis. Uses inorganic phosphate (PPi) as phosphoryl donor instead of ATP like common ATP-dependent phosphofructokinases (ATP-PFKs), which renders the reaction reversible, and can thus function both in glycolysis and gluconeogenesis. Consistently, PPi-PFK can replace the enzymes of both the forward (ATP-PFK) and reverse (fructose-bisphosphatase (FBPase)) reactions. The protein is Pyrophosphate--fructose 6-phosphate 1-phosphotransferase of Treponema pallidum (strain Nichols).